The sequence spans 1270 residues: MVDSVGFAEAWRAQFPDSEPPRMELRSVGDIEQELERCKASIRRLEQEVNQERFRMIYLQTLLAKEKKSYDRQRWGFRRAAQPPDGAAEPRASAPRLPPAPADGADPAPVEESEARPDGEGSPSKGRPATARRPAAAAPADRDDRGPPTSVAALRSNFEKIRKGPAQPGSADAEKPFYVNVEFHHERGLVKVNDKEVSDRISSLGSQAMQMERKKSQQSAGQGLGEAPRPHYRGRSSESSCGLDGDYEDAELNPRFLKDNLINANGGNRPPWPPLEYQPYQSIYVGGMMVEGEGKSPLLRSQSTSEQEKRLTWPRRSYSPRSFEDSGGGYTPDCSSNENLTSSEEDFSSGQSSRVSPSPTTYRMFRDKSRSPSQNSQQSFDSSSPPTPQCQKRHRQCQVVVSEATIVGVRKTGQIWPSDGDSTFQGEADSSFGTPPGYGCAADQAEEQRRHQDGLPYIDDSPSSSPHLSSKGRGSPASGALEPTKASELDLEKGLEMRKWVLSGILASEETYLSHLEALLLPMKPLKAAATTSQPVLTSQQIETIFFKVPELYEIHKEFYDGLFPRVQQWSHQQRVGDLFQKLASQLGVYRAFVDNYGVAMETAEKCCQANAQFAEISENLRARSNKDVKDSTTKNSLETLLYKPVDRVTRSTLVLHDLLKHTPSSHPDHSLLQDALRISQNFLSSINEEITPRRQSMTVKKGEHRQLLKDSFMVELVEGARKLRHIFLFTDLLLCTKLKKQSGGKTQQYDCKWYIPLTDLSFQMVDELEALPNIPLVPDEELDALKIKISQIKSDIQREKRANKGSKVMERLRKKLSEQESLLLLMSPSMAFRVHSRNGKSYTFLISSDYERAEWRESIREQQKKCFKSFSLTSVELQMLTNSCVKLQTVHHIPLTINKEDDESPGLYGFLHAIVHSATGFKQSSNLYCTLEVDSFGYFVNKAKTRVYRDTTEPNWNEEFEIELEGSQTLRILCYEKCYNKMKMAKEDGESADKLMGKGQVQLDPQTLQDRDWQRTVIDMNGIEVKLSVKFTSREFSLKRMPSRKQTGVFGVKIAVVTKRERSKVPYIVRQCVEEIERRGMEEVGIYRVSGVATDIQALKAAFDVNNKDVSVMMSEMDVNAIAGTLKLYFRELPEPLFTDEFYPNFAEGIALSDPVAKESCMLNLLLSLPEANLLTFLFLLDHLKRVAEKETVNKMSLHNLATVFGPTLLRPSEKESKLPANPSQPITMTDSWSLEVMSQVQVLLYFLQLEAIPAPDSKRQSILFSTEV.

Positions 28–55 form a coiled coil; the sequence is VGDIEQELERCKASIRRLEQEVNQERFR. 4 disordered regions span residues 67-173, 201-249, 295-396, and 412-484; these read KKSY…SADA, ISSL…DYED, KSPL…RHRQ, and TGQI…LEPT. Positions 126–139 are enriched in low complexity; the sequence is GRPATARRPAAAAP. Ser-216 and Ser-237 each carry phosphoserine. A Phosphotyrosine modification is found at Tyr-247. Composition is skewed to low complexity over residues 348–358 and 371–384; these read SSGQSSRVSPS and SPSQ…DSSS. A phosphoserine mark is found at Ser-358, Ser-379, and Ser-384. Residue Thr-387 is modified to Phosphothreonine. 2 positions are modified to phosphoserine: Ser-461 and Ser-465. Position 473 is an omega-N-methylarginine (Arg-473). 2 positions are modified to phosphoserine: Ser-475 and Ser-487. A DH domain is found at 497 to 690; sequence MRKWVLSGIL…QNFLSSINEE (194 aa). The residue at position 553 (Tyr-553) is a Phosphotyrosine. Thr-640 carries the post-translational modification Phosphothreonine. Tyr-643 is subject to Phosphotyrosine. A Phosphothreonine modification is found at Thr-692. The region spanning 707–865 is the PH domain; it reads QLLKDSFMVE…WRESIREQQK (159 aa). Positions 892–1019 constitute a C2 domain; the sequence is HHIPLTINKE…QDRDWQRTVI (128 aa). Residues 1053–1247 enclose the Rho-GAP domain; sequence VKIAVVTKRE…VMSQVQVLLY (195 aa). At Ser-1263 the chain carries Phosphoserine.

As to quaternary structure, homotetramer. Interacts with PDZK1. May interact with CCPG1. Interacts with HCK, FES/FPS, ABL1, PIK3R1 and GRB2. Interacts with SH2D5. Interacts with DLG4. Autophosphorylated. Phosphorylated by FES/FPS on tyrosine residues, leading to down-regulation of the BCR kinase activity. Phosphorylation by HCK is important for interaction with GRB2. As to expression, expressed in brain, including the cortex, hippocampus, cerebellum, and brainstem, as well as the spinal cord (at protein level).

It localises to the postsynaptic density. Its subcellular location is the cell projection. It is found in the dendritic spine. The protein localises to the axon. The protein resides in the synapse. The enzyme catalyses L-seryl-[protein] + ATP = O-phospho-L-seryl-[protein] + ADP + H(+). It catalyses the reaction L-threonyl-[protein] + ATP = O-phospho-L-threonyl-[protein] + ADP + H(+). Functionally, protein with a unique structure having two opposing regulatory activities toward small GTP-binding proteins. The C-terminus is a GTPase-activating protein (GAP) domain which stimulates GTP hydrolysis by RAC1, RAC2 and CDC42. Accelerates the intrinsic rate of GTP hydrolysis of RAC1 or CDC42, leading to down-regulation of the active GTP-bound form. The central Dbl homology (DH) domain functions as guanine nucleotide exchange factor (GEF) that modulates the GTPases CDC42, RHOA and RAC1. Promotes the conversion of CDC42, RHOA and RAC1 from the GDP-bound to the GTP-bound form. The amino terminus contains an intrinsic kinase activity. Functions as an important negative regulator of neuronal RAC1 activity. Regulates macrophage functions such as CSF1-directed motility and phagocytosis through the modulation of RAC1 activity. Plays a major role as a RHOA GEF in keratinocytes being involved in focal adhesion formation and keratinocyte differentiation. This is Breakpoint cluster region protein from Rattus norvegicus (Rat).